Consider the following 280-residue polypeptide: Large ribosomal subunit protein uL2 (280 aa).

2 disordered regions span residues 1–47 and 224–280; these read MAIR…NVHG and VVMN…SKKR. A compositionally biased stretch (basic and acidic residues) spans 23–33; the sequence is EITRSTPEKSL. The span at 37 to 47 shows a compositional bias: basic residues; it reads LPKKGGRNVHG. Residues 258-268 show a composition bias toward polar residues; it reads RNPNRYSNNMI. Over residues 270–280 the composition is skewed to basic residues; sequence QRRRTNKSKKR.

It belongs to the universal ribosomal protein uL2 family. As to quaternary structure, part of the 50S ribosomal subunit. Forms a bridge to the 30S subunit in the 70S ribosome.

In terms of biological role, one of the primary rRNA binding proteins. Required for association of the 30S and 50S subunits to form the 70S ribosome, for tRNA binding and peptide bond formation. It has been suggested to have peptidyltransferase activity; this is somewhat controversial. Makes several contacts with the 16S rRNA in the 70S ribosome. This chain is Large ribosomal subunit protein uL2, found in Corynebacterium diphtheriae (strain ATCC 700971 / NCTC 13129 / Biotype gravis).